The sequence spans 518 residues: Tyrosine/DOPA decarboxylase 1 (518 aa).

N6-(pyridoxal phosphate)lysine is present on Lys321.

This sequence belongs to the group II decarboxylase family. As to quaternary structure, homodimer. Pyridoxal 5'-phosphate is required as a cofactor. As to expression, predominantly expressed in the roots.

It carries out the reaction L-tyrosine + H(+) = tyramine + CO2. The enzyme catalyses L-dopa + H(+) = dopamine + CO2. The catalysed reaction is 5-hydroxy-L-tryptophan + H(+) = serotonin + CO2. Its function is as follows. Marginally higher substrate specificity for L-DOPA over L-tyrosine. This chain is Tyrosine/DOPA decarboxylase 1 (TYDC1), found in Papaver somniferum (Opium poppy).